Reading from the N-terminus, the 223-residue chain is MFGPRHFSVLKTTGSLVSSTFSSSLKPTATFSCARAFSQTSSIMSKVFFDLEWEGPVLGPNNKPTSEIKAQSGRINFTLYDDVVPKTARNFKELCTGQNGFGYKGSSFHRIIPEFMLQGGDFTRGNGTGGKSIYGEKFADENFAKKHVRPGLLSMANAGPNTNGSQFFVTTVPTSWLDGRHVVFGEVADDESMKVVKALEATGSSSGAIRYSKKPTIVDCGAL.

A mitochondrion-targeting transit peptide spans 1 to 44 (MFGPRHFSVLKTTGSLVSSTFSSSLKPTATFSCARAFSQTSSIM). The 161-residue stretch at 62-222 (NKPTSEIKAQ…KKPTIVDCGA (161 aa)) folds into the PPIase cyclophilin-type domain.

Belongs to the cyclophilin-type PPIase family.

The protein resides in the mitochondrion. It is found in the cytoplasm. The catalysed reaction is [protein]-peptidylproline (omega=180) = [protein]-peptidylproline (omega=0). With respect to regulation, binds cyclosporin A (CsA). CsA mediates some of its effects via an inhibitory action on PPIase. Functionally, PPIases accelerate the folding of proteins. It catalyzes the cis-trans isomerization of proline imidic peptide bonds in oligopeptides. The polypeptide is Peptidyl-prolyl cis-trans isomerase, mitochondrial (csr-1) (Neurospora crassa (strain ATCC 24698 / 74-OR23-1A / CBS 708.71 / DSM 1257 / FGSC 987)).